Reading from the N-terminus, the 226-residue chain is ATP synthase F(0) complex subunit a (226 aa).

Helical transmembrane passes span 5-25 (LFAP…LIII), 68-88 (WSLM…LGML), 97-117 (QLSM…ATGF), 136-156 (FLIP…PVAL), 179-199 (LVLM…LALL), and 201-221 (ILEF…VSLY).

It belongs to the ATPase A chain family. Component of the ATP synthase complex composed at least of ATP5F1A/subunit alpha, ATP5F1B/subunit beta, ATP5MC1/subunit c (homooctomer), MT-ATP6/subunit a, MT-ATP8/subunit 8, ATP5ME/subunit e, ATP5MF/subunit f, ATP5MG/subunit g, ATP5MK/subunit k, ATP5MJ/subunit j, ATP5F1C/subunit gamma, ATP5F1D/subunit delta, ATP5F1E/subunit epsilon, ATP5PF/subunit F6, ATP5PB/subunit b, ATP5PD/subunit d, ATP5PO/subunit OSCP. ATP synthase complex consists of a soluble F(1) head domain (subunits alpha(3) and beta(3)) - the catalytic core - and a membrane F(0) domain - the membrane proton channel (subunits c, a, 8, e, f, g, k and j). These two domains are linked by a central stalk (subunits gamma, delta, and epsilon) rotating inside the F1 region and a stationary peripheral stalk (subunits F6, b, d, and OSCP). Interacts with DNAJC30; interaction is direct.

The protein localises to the mitochondrion inner membrane. The catalysed reaction is H(+)(in) = H(+)(out). Functionally, subunit a, of the mitochondrial membrane ATP synthase complex (F(1)F(0) ATP synthase or Complex V) that produces ATP from ADP in the presence of a proton gradient across the membrane which is generated by electron transport complexes of the respiratory chain. ATP synthase complex consist of a soluble F(1) head domain - the catalytic core - and a membrane F(1) domain - the membrane proton channel. These two domains are linked by a central stalk rotating inside the F(1) region and a stationary peripheral stalk. During catalysis, ATP synthesis in the catalytic domain of F(1) is coupled via a rotary mechanism of the central stalk subunits to proton translocation. With the subunit c (ATP5MC1), forms the proton-conducting channel in the F(0) domain, that contains two crucial half-channels (inlet and outlet) that facilitate proton movement from the mitochondrial intermembrane space (IMS) into the matrix. Protons are taken up via the inlet half-channel and released through the outlet half-channel, following a Grotthuss mechanism. The protein is ATP synthase F(0) complex subunit a of Balaenoptera musculus (Blue whale).